Reading from the N-terminus, the 445-residue chain is Glutamyl-tRNA(Gln) amidotransferase subunit D (445 aa).

Residues 93–425 (SEIKIISTGG…EKIRSLMISN (333 aa)) form the Asparaginase/glutaminase domain. Active-site residues include threonine 103, threonine 179, aspartate 180, and lysine 258.

The protein belongs to the asparaginase 1 family. GatD subfamily. Heterodimer of GatD and GatE.

The enzyme catalyses L-glutamyl-tRNA(Gln) + L-glutamine + ATP + H2O = L-glutaminyl-tRNA(Gln) + L-glutamate + ADP + phosphate + H(+). Functionally, allows the formation of correctly charged Gln-tRNA(Gln) through the transamidation of misacylated Glu-tRNA(Gln) in organisms which lack glutaminyl-tRNA synthetase. The reaction takes place in the presence of glutamine and ATP through an activated gamma-phospho-Glu-tRNA(Gln). The GatDE system is specific for glutamate and does not act on aspartate. The sequence is that of Glutamyl-tRNA(Gln) amidotransferase subunit D from Saccharolobus islandicus (strain Y.N.15.51 / Yellowstone #2) (Sulfolobus islandicus).